A 271-amino-acid polypeptide reads, in one-letter code: MGHAARPGRFFGVYLLYCQNPRHRGRVYVGFTVNPARRVRQHNAGRKKGGAWRTSGRGPWDMVLILHGFPSAVAALRFEWAWQHPQASRRLTHVGPRLRSEASFTFHLRVLAHMLRVPPWVRLPLTVRWLRPDFRHELCPAPPPHMPIAFGPPPPQPLVPKRPAASEADSERRLDLGAKASCTLCARMLQDEEGPLCCPHPGCPLRAHIICLAEEFLQEEPGQLLPLEGHCPSCKKSLLWGNLVGQCHEDTEEEEVDLELEEEHWTDLLET.

The GIY-YIG domain occupies 9–94 (RFFGVYLLYC…PQASRRLTHV (86 aa)). The SLX1-type zinc finger occupies 182–234 (CTLCARMLQDEEGPLCCPHPGCPLRAHIICLAEEFLQEEPGQLLPLEGHCPSC).

This sequence belongs to the SLX1 family. In terms of assembly, forms a heterodimer with SLX4. The cofactor is a divalent metal cation.

The protein resides in the nucleus. Its function is as follows. Catalytic subunit of the SLX1-SLX4 structure-specific endonuclease that resolves DNA secondary structures generated during DNA repair and recombination. Has endonuclease activity towards branched DNA substrates, introducing single-strand cuts in duplex DNA close to junctions with ss-DNA. Has a preference for 5'-flap structures, and promotes symmetrical cleavage of static and migrating Holliday junctions (HJs). Resolves HJs by generating two pairs of ligatable, nicked duplex products. The polypeptide is Structure-specific endonuclease subunit SLX1 (Slx1b) (Rattus norvegicus (Rat)).